A 559-amino-acid polypeptide reads, in one-letter code: Dihydroxy-acid dehydratase (559 aa).

A Mg(2+)-binding site is contributed by aspartate 80. Cysteine 121 is a binding site for [2Fe-2S] cluster. Mg(2+) contacts are provided by aspartate 122 and lysine 123. Lysine 123 bears the N6-carboxylysine mark. Cysteine 194 is a [2Fe-2S] cluster binding site. Mg(2+) is bound at residue glutamate 447. Serine 473 (proton acceptor) is an active-site residue.

This sequence belongs to the IlvD/Edd family. Homodimer. Requires [2Fe-2S] cluster as cofactor. Mg(2+) serves as cofactor.

The enzyme catalyses (2R)-2,3-dihydroxy-3-methylbutanoate = 3-methyl-2-oxobutanoate + H2O. It carries out the reaction (2R,3R)-2,3-dihydroxy-3-methylpentanoate = (S)-3-methyl-2-oxopentanoate + H2O. Its pathway is amino-acid biosynthesis; L-isoleucine biosynthesis; L-isoleucine from 2-oxobutanoate: step 3/4. It participates in amino-acid biosynthesis; L-valine biosynthesis; L-valine from pyruvate: step 3/4. Functionally, functions in the biosynthesis of branched-chain amino acids. Catalyzes the dehydration of (2R,3R)-2,3-dihydroxy-3-methylpentanoate (2,3-dihydroxy-3-methylvalerate) into 2-oxo-3-methylpentanoate (2-oxo-3-methylvalerate) and of (2R)-2,3-dihydroxy-3-methylbutanoate (2,3-dihydroxyisovalerate) into 2-oxo-3-methylbutanoate (2-oxoisovalerate), the penultimate precursor to L-isoleucine and L-valine, respectively. This Chlorobium chlorochromatii (strain CaD3) protein is Dihydroxy-acid dehydratase.